We begin with the raw amino-acid sequence, 446 residues long: ATP-dependent protease ATPase subunit HslU (446 aa).

Residues isoleucine 17, 59–64 (GVGKTE), aspartate 255, glutamate 320, and arginine 392 each bind ATP.

The protein belongs to the ClpX chaperone family. HslU subfamily. A double ring-shaped homohexamer of HslV is capped on each side by a ring-shaped HslU homohexamer. The assembly of the HslU/HslV complex is dependent on binding of ATP.

It localises to the cytoplasm. In terms of biological role, ATPase subunit of a proteasome-like degradation complex; this subunit has chaperone activity. The binding of ATP and its subsequent hydrolysis by HslU are essential for unfolding of protein substrates subsequently hydrolyzed by HslV. HslU recognizes the N-terminal part of its protein substrates and unfolds these before they are guided to HslV for hydrolysis. The chain is ATP-dependent protease ATPase subunit HslU from Pseudomonas fluorescens (strain ATCC BAA-477 / NRRL B-23932 / Pf-5).